We begin with the raw amino-acid sequence, 45 residues long: Large ribosomal subunit protein bL34 (45 aa).

This sequence belongs to the bacterial ribosomal protein bL34 family.

The polypeptide is Large ribosomal subunit protein bL34 (Leifsonia xyli subsp. xyli (strain CTCB07)).